Consider the following 356-residue polypeptide: Carminomycin 4-O-methyltransferase DauK (356 aa).

R153 is an S-adenosyl-L-methionine binding site. Substrate is bound at residue D163. Residues G187, E210, 237–238 (DF), and S252 each bind S-adenosyl-L-methionine. Substrate is bound by residues N257 and R303.

It belongs to the class I-like SAM-binding methyltransferase superfamily. Cation-independent O-methyltransferase family. Homodimer and homotetramer in equilibrium.

It catalyses the reaction carminomycin + S-adenosyl-L-methionine = daunorubicin + S-adenosyl-L-homocysteine + H(+). Its pathway is antibiotic biosynthesis; daunorubicin biosynthesis. It participates in antibiotic biosynthesis; carminomycin biosynthesis. Its activity is regulated as follows. Strongly inhibited by S-adenosyl-L-homocysteine and weakly by adenine and methionine. Involved in the biosynthesis of the anthracyclines carminomycin and daunorubicin (daunomycin) which are aromatic polyketide antibiotics that exhibit high cytotoxicity and are widely applied in the chemotherapy of a variety of cancers. In vivo, catalyzes the transfer of a methyl group from S-adenosyl-L-methionine to the 4-O-position of carminomycin to form daunorubicin. In vitro, it also methylates the anthracyclines rhodomycin D (10-carbomethoxy-13-deoxycarminomycin), 10-carboxy-13-deoxycarminomycin, 13-deoxy-carminomycin and 13-dihydrocarminomycin at the 4-hydroxyl position. In Streptomyces sp. (strain C5), this protein is Carminomycin 4-O-methyltransferase DauK (dauK).